The chain runs to 541 residues: Chaperonin GroEL (541 aa).

Residues 29–32 (TLGP), 86–90 (DGTTT), G413, 476–478 (NAA), and D492 each bind ATP.

Belongs to the chaperonin (HSP60) family. Forms a cylinder of 14 subunits composed of two heptameric rings stacked back-to-back. Interacts with the co-chaperonin GroES.

The protein localises to the cytoplasm. The enzyme catalyses ATP + H2O + a folded polypeptide = ADP + phosphate + an unfolded polypeptide.. Functionally, together with its co-chaperonin GroES, plays an essential role in assisting protein folding. The GroEL-GroES system forms a nano-cage that allows encapsulation of the non-native substrate proteins and provides a physical environment optimized to promote and accelerate protein folding. The protein is Chaperonin GroEL of Streptococcus equi subsp. equi (strain 4047).